The sequence spans 255 residues: Type III pantothenate kinase (255 aa).

6–13 is an ATP binding site; it reads DVGNTNTV. 108–111 contributes to the substrate binding site; that stretch reads GADR. Asp110 functions as the Proton acceptor in the catalytic mechanism. Residue Asp130 participates in K(+) binding. Position 133 (Thr133) interacts with ATP. Substrate is bound at residue Thr185.

It belongs to the type III pantothenate kinase family. In terms of assembly, homodimer. It depends on NH4(+) as a cofactor. K(+) is required as a cofactor.

The protein localises to the cytoplasm. The catalysed reaction is (R)-pantothenate + ATP = (R)-4'-phosphopantothenate + ADP + H(+). It participates in cofactor biosynthesis; coenzyme A biosynthesis; CoA from (R)-pantothenate: step 1/5. In terms of biological role, catalyzes the phosphorylation of pantothenate (Pan), the first step in CoA biosynthesis. The chain is Type III pantothenate kinase from Hyphomonas neptunium (strain ATCC 15444).